The following is a 321-amino-acid chain: Basic leucine zipper 34 (321 aa).

The tract at residues 97–189 (TDDDNLHSNP…SGNRILDPKR (93 aa)) is disordered. Low complexity-rich tracts occupy residues 110–133 (NNKNNNVGPTGSSSNTSTPSNSFN), 145–155 (NMNNNINNNYN), and 172–182 (SNNNSGDSSGN). Positions 186 to 238 (DPKRVKRILANRQSAQRSRVRKLQYISELERSVTSLQAEVSVLSPRVAFLDHQ) constitute a bZIP domain. Residues 188-207 (KRVKRILANRQSAQRSRVRK) form a basic motif region. Residues 214 to 235 (LERSVTSLQAEVSVLSPRVAFL) are leucine-zipper.

Forms heterodimers with BZIP18, BZIP43 and VIP1/BZIP51. Expressed in vascular tissues of leaves, stems and siliques, anthers, filaments, tapetum, mature pollen grains, pistil vascular tissues and papillar cells, and funiculi.

It is found in the nucleus. Transcriptional activator involved in the sporophytic control of cell wall patterning and gametophytic control of pollen development. May play a role in the control of metabolic pathways regulating cellular transport and lipid metabolism. This chain is Basic leucine zipper 34, found in Arabidopsis thaliana (Mouse-ear cress).